A 181-amino-acid polypeptide reads, in one-letter code: Endoribonuclease YbeY (181 aa).

The Zn(2+) site is built by His-120, His-124, and His-130. The tract at residues 157–181 is disordered; sequence AGGKRPAGGADGADGAGEPGPTAAR. Positions 161-174 are enriched in gly residues; that stretch reads RPAGGADGADGAGE.

This sequence belongs to the endoribonuclease YbeY family. Zn(2+) is required as a cofactor.

It localises to the cytoplasm. Functionally, single strand-specific metallo-endoribonuclease involved in late-stage 70S ribosome quality control and in maturation of the 3' terminus of the 16S rRNA. This chain is Endoribonuclease YbeY, found in Frankia alni (strain DSM 45986 / CECT 9034 / ACN14a).